The sequence spans 80 residues: Exodeoxyribonuclease 7 small subunit (80 aa).

The protein belongs to the XseB family. As to quaternary structure, heterooligomer composed of large and small subunits.

The protein localises to the cytoplasm. It catalyses the reaction Exonucleolytic cleavage in either 5'- to 3'- or 3'- to 5'-direction to yield nucleoside 5'-phosphates.. Functionally, bidirectionally degrades single-stranded DNA into large acid-insoluble oligonucleotides, which are then degraded further into small acid-soluble oligonucleotides. The polypeptide is Exodeoxyribonuclease 7 small subunit (Pseudomonas fluorescens (strain Pf0-1)).